Consider the following 270-residue polypeptide: Acyl-[acyl-carrier-protein]--UDP-N-acetylglucosamine O-acyltransferase (270 aa).

This sequence belongs to the transferase hexapeptide repeat family. LpxA subfamily. Homotrimer.

It is found in the cytoplasm. The enzyme catalyses a (3R)-hydroxyacyl-[ACP] + UDP-N-acetyl-alpha-D-glucosamine = a UDP-3-O-[(3R)-3-hydroxyacyl]-N-acetyl-alpha-D-glucosamine + holo-[ACP]. The protein operates within glycolipid biosynthesis; lipid IV(A) biosynthesis; lipid IV(A) from (3R)-3-hydroxytetradecanoyl-[acyl-carrier-protein] and UDP-N-acetyl-alpha-D-glucosamine: step 1/6. Involved in the biosynthesis of lipid A, a phosphorylated glycolipid that anchors the lipopolysaccharide to the outer membrane of the cell. This Bartonella tribocorum (strain CIP 105476 / IBS 506) protein is Acyl-[acyl-carrier-protein]--UDP-N-acetylglucosamine O-acyltransferase.